A 304-amino-acid chain; its full sequence is Sulfate adenylyltransferase subunit 2 (304 aa).

It belongs to the PAPS reductase family. CysD subfamily. In terms of assembly, heterodimer composed of CysD, the smaller subunit, and CysNC.

The enzyme catalyses sulfate + ATP + H(+) = adenosine 5'-phosphosulfate + diphosphate. Its pathway is sulfur metabolism; hydrogen sulfide biosynthesis; sulfite from sulfate: step 1/3. Its function is as follows. With CysN forms the ATP sulfurylase (ATPS) that catalyzes the adenylation of sulfate producing adenosine 5'-phosphosulfate (APS) and diphosphate, the first enzymatic step in sulfur assimilation pathway. APS synthesis involves the formation of a high-energy phosphoric-sulfuric acid anhydride bond driven by GTP hydrolysis by CysN coupled to ATP hydrolysis by CysD. This Xylella fastidiosa (strain 9a5c) protein is Sulfate adenylyltransferase subunit 2.